Here is a 198-residue protein sequence, read N- to C-terminus: Hookworm platelet inhibitor 1 (198 aa).

The N-terminal stretch at Met-1–Ala-17 is a signal peptide. Cystine bridges form between Cys-24–Cys-65, Cys-78–Cys-146, Cys-141–Cys-154, Cys-174–Cys-186, and Cys-177–Cys-195.

It belongs to the CRISP family. As to quaternary structure, monomer. In terms of tissue distribution, detected in cephalic glands.

The protein resides in the secreted. Its function is as follows. Hookworms inhibitor of platelet aggregation and adhesion. Native protein inhibits platelet aggregation induced by ADP, epinephrine, and thrombin. In addition, it prevents adhesion of resting platelets to immobilized fibrinogen and collagen. May act by binding to glycoprotein IIb/IIIa (ITGA2B/ITGB3) and integrin alpha-2/beta-1 (ITGA1/ITGB1), respectively. It is noteworthy that the recombinant protein fails to inhibit binding to fibrinogen (through ITGA2B/ITGB3) and collagen (through ITGA1/ITGB1). The chain is Hookworm platelet inhibitor 1 from Ancylostoma caninum (Dog hookworm).